We begin with the raw amino-acid sequence, 121 residues long: Peptidyl-tRNA hydrolase (121 aa).

It belongs to the PTH2 family.

It localises to the cytoplasm. It carries out the reaction an N-acyl-L-alpha-aminoacyl-tRNA + H2O = an N-acyl-L-amino acid + a tRNA + H(+). The natural substrate for this enzyme may be peptidyl-tRNAs which drop off the ribosome during protein synthesis. This is Peptidyl-tRNA hydrolase from Staphylothermus marinus (strain ATCC 43588 / DSM 3639 / JCM 9404 / F1).